Reading from the N-terminus, the 1367-residue chain is Insulin-like growth factor 1 receptor (1367 aa).

The N-terminal stretch at M1–G30 is a signal peptide. C33 and C52 are oxidised to a cystine. 3 N-linked (GlcNAc...) asparagine glycosylation sites follow: N51, N102, and N135. Cystine bridges form between C150-C178, C182-C205, C192-C211, C215-C224, C219-C230, C231-C239, C235-C248, C251-C260, C264-C276, C282-C303, C307-C321, C324-C328, and C332-C353. Residue N244 is glycosylated (N-linked (GlcNAc...) asparagine). The N-linked (GlcNAc...) asparagine glycan is linked to N314. N-linked (GlcNAc...) asparagine glycans are attached at residues N417 and N438. A disulfide bond links C455 and C488. 4 Fibronectin type-III domains span residues D491–S609, V610–E708, P735–A828, and I834–K927. Residues N534, N607, N622, N640, N747, N756, N764, N900, and N913 are each glycosylated (N-linked (GlcNAc...) asparagine). At D741 to H935 the chain is on the extracellular side. Residues L936 to H959 traverse the membrane as a helical segment. Over R960 to C1367 the chain is Cytoplasmic. The short motif at N977–Y980 is the IRS1- and SHC1-binding element. Phosphotyrosine is present on Y980. The 276-residue stretch at I999–F1274 folds into the Protein kinase domain. Residues L1005–V1013 and K1033 contribute to the ATP site. Residue D1135 is the Proton acceptor of the active site. A phosphotyrosine; by autocatalysis mark is found at Y1161, Y1165, and Y1166. Residues K1168 and K1171 each participate in a glycyl lysine isopeptide (Lys-Gly) (interchain with G-Cter in ubiquitin) cross-link. S1278 carries the phosphoserine; by GSK3-beta modification. S1282 is modified (phosphoserine). Residues P1288–C1367 form a disordered region. Residues P1290–N1299 are compositionally biased toward acidic residues. The segment covering M1300–L1316 has biased composition (low complexity). Positions P1317–E1326 are enriched in basic and acidic residues.

It belongs to the protein kinase superfamily. Tyr protein kinase family. Insulin receptor subfamily. As to quaternary structure, tetramer of 2 alpha and 2 beta chains linked by disulfide bonds. The alpha chains contribute to the formation of the ligand-binding domain, while the beta chain carries the kinase domain. Interacts with PIK3R1 and with the PTB/PID domains of IRS1 and SHC1 in vitro when autophosphorylated on tyrosine residues. Forms a hybrid receptor with INSR, the hybrid is a tetramer consisting of 1 alpha chain and 1 beta chain of INSR and 1 alpha chain and 1 beta chain of IGF1R. Interacts with ARRB1 and ARRB2. Interacts with GRB10. Interacts with RACK1. Interacts with SOCS1, SOCS2 and SOCS3. Interacts with 14-3-3 proteins. Interacts with NMD2. Interacts with MAP3K5. Interacts with STAT3. Found in a ternary complex with IGF1 and ITGAV:ITGB3 or ITGA6:ITGB4. Interacts (nascent precursor form) with ZFAND2B. (Microbial infection) Interacts with human respiratory syncytial virus (HRSV) fusion glycoprotein F1/F2 heterodimer. Autophosphorylated on tyrosine residues in response to ligand binding. Autophosphorylation occurs in trans, i.e. one subunit of the dimeric receptor phosphorylates tyrosine residues on the other subunit. Autophosphorylation occurs in a sequential manner; Tyr-1165 is predominantly phosphorylated first, followed by phosphorylation of Tyr-1161 and Tyr-1166. While every single phosphorylation increases kinase activity, all three tyrosine residues in the kinase activation loop (Tyr-1165, Tyr-1161 and Tyr-1166) have to be phosphorylated for optimal activity. Can be autophosphorylated at additional tyrosine residues (in vitro). Autophosphorylated is followed by phosphorylation of juxtamembrane tyrosines and C-terminal serines. May also be phosphorylated at Tyr-1161 and Tyr-1166 by mTORC2. Phosphorylation of Tyr-980 is required for IRS1- and SHC1-binding. Phosphorylation of Ser-1278 by GSK-3beta restrains kinase activity and promotes cell surface expression, it requires a priming phosphorylation at Ser-1282. Dephosphorylated by PTPN1. Post-translationally, polyubiquitinated at Lys-1168 and Lys-1171 through both 'Lys-48' and 'Lys-29' linkages, promoting receptor endocytosis and subsequent degradation by the proteasome. Ubiquitination is facilitated by pre-existing phosphorylation. In terms of processing, sumoylated with SUMO1. Controlled by regulated intramembrane proteolysis (RIP). Undergoes metalloprotease-dependent constitutive ectodomain shedding to produce a membrane-anchored 52 kDa C-Terminal fragment which is further processed by presenilin gamma-secretase to yield an intracellular 50 kDa fragment. In terms of tissue distribution, found as a hybrid receptor with INSR in muscle, heart, kidney, adipose tissue, skeletal muscle, hepatoma, fibroblasts, spleen and placenta (at protein level). Expressed in a variety of tissues. Overexpressed in tumors, including melanomas, cancers of the colon, pancreas prostate and kidney.

The protein localises to the cell membrane. It carries out the reaction L-tyrosyl-[protein] + ATP = O-phospho-L-tyrosyl-[protein] + ADP + H(+). Activated by autophosphorylation at Tyr-1165, Tyr-1161 and Tyr-1166 on the kinase activation loop; phosphorylation at all three tyrosine residues is required for optimal kinase activity. Inhibited by MSC1609119A-1, BMS-754807, PQIP, benzimidazole pyridinone, isoquinolinedione, bis-azaindole, 3-cyanoquinoline, 2,4-bis-arylamino-1,3-pyrimidine, pyrrolopyrimidine, pyrrole-5-carboxaldehyde, picropodophyllin (PPP), tyrphostin derivatives. While most inhibitors bind to the ATP binding pocket, MSC1609119A-1 functions as allosteric inhibitor and binds close to the DFG motif and the activation loop. Receptor tyrosine kinase which mediates actions of insulin-like growth factor 1 (IGF1). Binds IGF1 with high affinity and IGF2 and insulin (INS) with a lower affinity. The activated IGF1R is involved in cell growth and survival control. IGF1R is crucial for tumor transformation and survival of malignant cell. Ligand binding activates the receptor kinase, leading to receptor autophosphorylation, and tyrosines phosphorylation of multiple substrates, that function as signaling adapter proteins including, the insulin-receptor substrates (IRS1/2), Shc and 14-3-3 proteins. Phosphorylation of IRSs proteins lead to the activation of two main signaling pathways: the PI3K-AKT/PKB pathway and the Ras-MAPK pathway. The result of activating the MAPK pathway is increased cellular proliferation, whereas activating the PI3K pathway inhibits apoptosis and stimulates protein synthesis. Phosphorylated IRS1 can activate the 85 kDa regulatory subunit of PI3K (PIK3R1), leading to activation of several downstream substrates, including protein AKT/PKB. AKT phosphorylation, in turn, enhances protein synthesis through mTOR activation and triggers the antiapoptotic effects of IGFIR through phosphorylation and inactivation of BAD. In parallel to PI3K-driven signaling, recruitment of Grb2/SOS by phosphorylated IRS1 or Shc leads to recruitment of Ras and activation of the ras-MAPK pathway. In addition to these two main signaling pathways IGF1R signals also through the Janus kinase/signal transducer and activator of transcription pathway (JAK/STAT). Phosphorylation of JAK proteins can lead to phosphorylation/activation of signal transducers and activators of transcription (STAT) proteins. In particular activation of STAT3, may be essential for the transforming activity of IGF1R. The JAK/STAT pathway activates gene transcription and may be responsible for the transforming activity. JNK kinases can also be activated by the IGF1R. IGF1 exerts inhibiting activities on JNK activation via phosphorylation and inhibition of MAP3K5/ASK1, which is able to directly associate with the IGF1R. Its function is as follows. When present in a hybrid receptor with INSR, binds IGF1. PubMed:12138094 shows that hybrid receptors composed of IGF1R and INSR isoform Long are activated with a high affinity by IGF1, with low affinity by IGF2 and not significantly activated by insulin, and that hybrid receptors composed of IGF1R and INSR isoform Short are activated by IGF1, IGF2 and insulin. In contrast, PubMed:16831875 shows that hybrid receptors composed of IGF1R and INSR isoform Long and hybrid receptors composed of IGF1R and INSR isoform Short have similar binding characteristics, both bind IGF1 and have a low affinity for insulin. The chain is Insulin-like growth factor 1 receptor (IGF1R) from Homo sapiens (Human).